Here is a 100-residue protein sequence, read N- to C-terminus: Cobalt transport protein CbiN (100 aa).

2 helical membrane-spanning segments follow: residues 8-28 (LSNW…LIFV) and 69-89 (LLFS…VGLY).

It belongs to the CbiN family. In terms of assembly, forms an energy-coupling factor (ECF) transporter complex composed of an ATP-binding protein (A component, CbiO), a transmembrane protein (T component, CbiQ) and 2 possible substrate-capture proteins (S components, CbiM and CbiN) of unknown stoichimetry.

It is found in the cell inner membrane. Its pathway is cofactor biosynthesis; adenosylcobalamin biosynthesis. Part of the energy-coupling factor (ECF) transporter complex CbiMNOQ involved in cobalt import. This is Cobalt transport protein CbiN from Nostoc sp. (strain PCC 7120 / SAG 25.82 / UTEX 2576).